The sequence spans 282 residues: MTNLTQLEMIIEKAFDDRDSIKTTTKGEIRESVEHALNLLDKGEIRVAERQKNGQWHVHQWLKKAVLLFFRLNPMQIIAGGVNGTYWWDKVPSKFSNWQETDFKKANFRSVPGTIVRHSAYIAPNVILMPSFVNLGAFIDEGTMVDTWATVGSCAQIGKHVHLSGGVGLGGVLEPLQANPTIIEDHCFIGARSEVVEGCIIREGAVLGMGVFIGKSTKIIDRTTGEVFIGEVPAYSVVVPGSLPGKPLPNGEVGPNLYCAVIVKRVDQKTREKTSINDLLRD.

2 residues coordinate substrate: Arg-109 and Asp-146.

This sequence belongs to the transferase hexapeptide repeat family. As to quaternary structure, homotrimer.

The protein localises to the cytoplasm. The enzyme catalyses (S)-2,3,4,5-tetrahydrodipicolinate + succinyl-CoA + H2O = (S)-2-succinylamino-6-oxoheptanedioate + CoA. It functions in the pathway amino-acid biosynthesis; L-lysine biosynthesis via DAP pathway; LL-2,6-diaminopimelate from (S)-tetrahydrodipicolinate (succinylase route): step 1/3. This chain is 2,3,4,5-tetrahydropyridine-2,6-dicarboxylate N-succinyltransferase, found in Bartonella quintana (strain Toulouse) (Rochalimaea quintana).